The sequence spans 1119 residues: SH3 and PX domain-containing protein 2A (1119 aa).

The PX domain occupies 4–128 (RTVLDVKVVD…RFFETKPDDI (125 aa)). SH3 domains lie at 149–208 (MVLE…SQSG) and 249–308 (SREE…KLKD). Disordered stretches follow at residues 388–429 (SSAT…PPRR), 494–595 (APSS…SNPA), 641–815 (SSDD…HESV), 914–941 (NLRS…AMLN), and 957–1004 (RPQS…SSFT). Positions 445–504 (TVEAEYYTIAEFQSSISDGISFRGGQKADVIEKNSGGWWYVQIGDTEGWAPSSYIDKRKK) constitute an SH3 3 domain. Composition is skewed to basic and acidic residues over residues 581-590 (PKPEPRKFEI) and 688-718 (GRAE…DVEI). Over residues 779-802 (TASVVSSEDSTSSRSTSDLSSVYS) the composition is skewed to low complexity. Positions 806 to 815 (RGGESDHESV) are enriched in basic and acidic residues. The 60-residue stretch at 812 to 871 (HESVLFRTTDAYERAQESELSFPAGVEVEVLEKQESGWWFVRWGSDEGWVPTFYLEPIKH) folds into the SH3 4 domain. Positions 1058 to 1119 (NLREVYVSIA…VPSNYLERKK (62 aa)) constitute an SH3 5 domain.

The protein belongs to the SH3PXD2 family. Post-translationally, tyrosine phosphorylated.

The protein resides in the cytoplasm. It is found in the cell projection. Its subcellular location is the podosome. In terms of biological role, adapter protein involved in invadopodia and podosome formation and extracellular matrix degradation. The sequence is that of SH3 and PX domain-containing protein 2A (sh3pxd2a) from Danio rerio (Zebrafish).